We begin with the raw amino-acid sequence, 264 residues long: MEMO1 family protein Mbur_2394 (264 aa).

Belongs to the MEMO1 family.

This chain is MEMO1 family protein Mbur_2394, found in Methanococcoides burtonii (strain DSM 6242 / NBRC 107633 / OCM 468 / ACE-M).